Consider the following 291-residue polypeptide: 4-hydroxy-tetrahydrodipicolinate synthase (291 aa).

Position 45 (threonine 45) interacts with pyruvate. The active-site Proton donor/acceptor is the tyrosine 133. Lysine 161 (schiff-base intermediate with substrate) is an active-site residue. Isoleucine 203 is a pyruvate binding site.

Belongs to the DapA family. Homotetramer; dimer of dimers.

It is found in the cytoplasm. It catalyses the reaction L-aspartate 4-semialdehyde + pyruvate = (2S,4S)-4-hydroxy-2,3,4,5-tetrahydrodipicolinate + H2O + H(+). The protein operates within amino-acid biosynthesis; L-lysine biosynthesis via DAP pathway; (S)-tetrahydrodipicolinate from L-aspartate: step 3/4. In terms of biological role, catalyzes the condensation of (S)-aspartate-beta-semialdehyde [(S)-ASA] and pyruvate to 4-hydroxy-tetrahydrodipicolinate (HTPA). In Neisseria meningitidis serogroup C (strain 053442), this protein is 4-hydroxy-tetrahydrodipicolinate synthase.